Consider the following 432-residue polypeptide: NADH-quinone oxidoreductase subunit D (432 aa).

The protein belongs to the complex I 49 kDa subunit family. In terms of assembly, NDH-1 is composed of 14 different subunits. Subunits NuoB, C, D, E, F, and G constitute the peripheral sector of the complex.

Its subcellular location is the cell membrane. It catalyses the reaction a quinone + NADH + 5 H(+)(in) = a quinol + NAD(+) + 4 H(+)(out). Functionally, NDH-1 shuttles electrons from NADH, via FMN and iron-sulfur (Fe-S) centers, to quinones in the respiratory chain. The immediate electron acceptor for the enzyme in this species is believed to be a menaquinone. Couples the redox reaction to proton translocation (for every two electrons transferred, four hydrogen ions are translocated across the cytoplasmic membrane), and thus conserves the redox energy in a proton gradient. In Mycobacteroides abscessus (strain ATCC 19977 / DSM 44196 / CCUG 20993 / CIP 104536 / JCM 13569 / NCTC 13031 / TMC 1543 / L948) (Mycobacterium abscessus), this protein is NADH-quinone oxidoreductase subunit D.